The primary structure comprises 437 residues: U1 small nuclear ribonucleoprotein 70 kDa (437 aa).

Position 2 is an N-acetylthreonine (Thr-2). The interval Phe-48 to Gln-79 is disordered. Over residues Ala-60 to Gln-79 the composition is skewed to basic and acidic residues. Residues His-92–Gly-202 are required for interaction with U1 RNA. Residues Lys-103 to Gly-181 enclose the RRM domain. Residue Lys-118 is modified to N6-acetyllysine. Position 126 is a phosphotyrosine (Tyr-126). Residues Trp-187–Glu-437 form a disordered region. Over residues Leu-192–Arg-201 the composition is skewed to gly residues. The span at Asn-207–Arg-254 shows a compositional bias: basic and acidic residues. A phosphoserine mark is found at Ser-226 and Ser-268. Positions Arg-255–Ser-268 are enriched in basic residues. Composition is skewed to basic and acidic residues over residues Arg-269–Arg-286 and Arg-294–Arg-310. Ser-320 is modified (phosphoserine). Basic and acidic residues predominate over residues Pro-343 to Arg-393. Lys-346 is covalently cross-linked (Glycyl lysine isopeptide (Lys-Gly) (interchain with G-Cter in SUMO2)). The residue at position 410 (Ser-410) is a Phosphoserine.

Component of the U1 snRNP. The U1 snRNP is composed of the U1 snRNA and the 7 core Sm proteins SNRPB, SNRPD1, SNRPD2, SNRPD3, SNRPE, SNRPF and SNRPG that assemble in a heptameric protein ring on the Sm site of the small nuclear RNA to form the core snRNP, and at least three U1 snRNP-specific proteins SNRNP70/U1-70K, SNRPA/U1-A and SNRPC/U1-C. Interacts with SCNM1. Found in a pre-mRNA splicing complex with SFRS4, SFRS5, SNRNP70, SNRPA1, SRRM1 and SRRM2. Found in a pre-mRNA exonic splicing enhancer (ESE) complex with SNRNP70, SNRPA1, SRRM1 and TRA2B/SFRS10. Interacts with dephosphorylated SFRS13A and SFPQ. Interacts with NUDT21/CPSF5, CPSF6, SCAF11, and ZRANB2. Interacts with GEMIN5. Interacts with FUS. The N-terminus is blocked. Post-translationally, extensively phosphorylated on serine residues in the C-terminal region.

Its subcellular location is the nucleus speckle. It localises to the nucleus. It is found in the nucleoplasm. Functionally, component of the spliceosomal U1 snRNP, which is essential for recognition of the pre-mRNA 5' splice-site and the subsequent assembly of the spliceosome. SNRNP70 binds to the loop I region of U1-snRNA. Truncated isoforms that lack the RRM domain cannot bind U1-snRNA. This is U1 small nuclear ribonucleoprotein 70 kDa (SNRNP70) from Homo sapiens (Human).